The chain runs to 168 residues: Signal peptidase complex catalytic subunit SEC11 (168 aa).

Topologically, residues 1–12 are cytoplasmic; sequence MNLRLELTRFLN. Residues 13–30 form a helical; Signal-anchor for type II membrane protein membrane-spanning segment; the sequence is LCFALASAFMFWKGLSIV. Topologically, residues 31-168 are lumenal; it reads TNSHSPIVVV…IALSALLSNE (138 aa). Residues serine 44, histidine 83, and aspartate 110 each act as charge relay system in the active site. A C-terminal short (CTS) helix region spans residues 154-165; the sequence is GLMGLIALSALL.

Belongs to the peptidase S26B family. Component of the signal peptidase complex (SPC) composed of a catalytic subunit SEC11 and three accessory subunits SPC1, SPC2 and SPC3. The complex induces a local thinning of the ER membrane which is used to measure the length of the signal peptide (SP) h-region of protein substrates. This ensures the selectivity of the complex towards h-regions shorter than 18-20 amino acids. SPC associates with the translocon complex.

The protein localises to the endoplasmic reticulum membrane. It catalyses the reaction Cleavage of hydrophobic, N-terminal signal or leader sequences from secreted and periplasmic proteins.. In terms of biological role, catalytic component of the signal peptidase complex (SPC) which catalyzes the cleavage of N-terminal signal sequences from nascent proteins as they are translocated into the lumen of the endoplasmic reticulum. Specifically cleaves N-terminal signal peptides that contain a hydrophobic alpha-helix (h-region) shorter than 18-20 amino acids. This Lachancea thermotolerans (strain ATCC 56472 / CBS 6340 / NRRL Y-8284) (Yeast) protein is Signal peptidase complex catalytic subunit SEC11 (SEC11).